A 344-amino-acid polypeptide reads, in one-letter code: Phenylalanine--tRNA ligase alpha subunit (344 aa).

Mg(2+) is bound at residue Glu256.

The protein belongs to the class-II aminoacyl-tRNA synthetase family. Phe-tRNA synthetase alpha subunit type 1 subfamily. In terms of assembly, tetramer of two alpha and two beta subunits. Requires Mg(2+) as cofactor.

It is found in the cytoplasm. It carries out the reaction tRNA(Phe) + L-phenylalanine + ATP = L-phenylalanyl-tRNA(Phe) + AMP + diphosphate + H(+). This is Phenylalanine--tRNA ligase alpha subunit (pheS) from Bacillus subtilis (strain 168).